The chain runs to 249 residues: DNA repair protein RecO (249 aa).

This sequence belongs to the RecO family.

Involved in DNA repair and RecF pathway recombination. The protein is DNA repair protein RecO of Solidesulfovibrio magneticus (strain ATCC 700980 / DSM 13731 / RS-1) (Desulfovibrio magneticus).